The following is a 163-amino-acid chain: Probable ribosome biogenesis protein RLP24 (163 aa).

Belongs to the eukaryotic ribosomal protein eL24 family. Associated with nucleolar and cytoplasmic pre-60S particles. At the end of biogenesis it dissociates from cytoplasmic pre-60S particles and is likely to be exchanged for its ribosomal homolog, RPL24.

It is found in the nucleus. It localises to the nucleolus. In terms of biological role, involved in the biogenesis of the 60S ribosomal subunit. Ensures the docking of GTPBP4/NOG1 to pre-60S particles. The sequence is that of Probable ribosome biogenesis protein RLP24 (RSL24D1) from Pongo abelii (Sumatran orangutan).